A 153-amino-acid polypeptide reads, in one-letter code: Deoxyuridine 5'-triphosphate nucleotidohydrolase (153 aa).

Substrate-binding positions include 71–73 (RSG), N84, 88–90 (LID), and M98.

It belongs to the dUTPase family. It depends on Mg(2+) as a cofactor.

It carries out the reaction dUTP + H2O = dUMP + diphosphate + H(+). It functions in the pathway pyrimidine metabolism; dUMP biosynthesis; dUMP from dCTP (dUTP route): step 2/2. In terms of biological role, this enzyme is involved in nucleotide metabolism: it produces dUMP, the immediate precursor of thymidine nucleotides and it decreases the intracellular concentration of dUTP so that uracil cannot be incorporated into DNA. The polypeptide is Deoxyuridine 5'-triphosphate nucleotidohydrolase (Hydrogenovibrio crunogenus (strain DSM 25203 / XCL-2) (Thiomicrospira crunogena)).